The chain runs to 360 residues: Pyrimidine monooxygenase RutA (360 aa).

Residues 49-50, N115, E124, 140-141, and S190 contribute to the FMN site; these read IK and RY.

It belongs to the NtaA/SnaA/DszA monooxygenase family. RutA subfamily.

It carries out the reaction uracil + FMNH2 + NADH + O2 = (Z)-3-ureidoacrylate + FMN + NAD(+) + H2O + H(+). The enzyme catalyses thymine + FMNH2 + NADH + O2 = (Z)-2-methylureidoacrylate + FMN + NAD(+) + H2O + H(+). Functionally, catalyzes the pyrimidine ring opening between N-3 and C-4 by an unusual flavin hydroperoxide-catalyzed mechanism, adding oxygen atoms in the process to yield ureidoacrylate peracid, that immediately reacts with FMN forming ureidoacrylate and FMN-N(5)-oxide. The FMN-N(5)-oxide reacts spontaneously with NADH to produce FMN. Requires the flavin reductase RutF to regenerate FMN in vivo. This chain is Pyrimidine monooxygenase RutA, found in Pseudomonas syringae pv. syringae (strain B728a).